The primary structure comprises 292 residues: 2-methylisocitrate lyase (292 aa).

Substrate is bound at residue 44-46 (SGA). Mg(2+)-binding residues include D84 and D86. Substrate-binding positions include 121–122 (CG), R156, E186, 208–210 (NMT), R239, and R268.

The protein belongs to the isocitrate lyase/PEP mutase superfamily. Methylisocitrate lyase family. In terms of assembly, homotetramer; dimer of dimers. Requires Mg(2+) as cofactor.

It catalyses the reaction (2S,3R)-3-hydroxybutane-1,2,3-tricarboxylate = pyruvate + succinate. Its pathway is organic acid metabolism; propanoate degradation. Its function is as follows. Involved in the catabolism of short chain fatty acids (SCFA) via the 2-methylcitrate cycle I (propionate degradation route). Catalyzes the thermodynamically favored C-C bond cleavage of (2R,3S)-2-methylisocitrate to yield pyruvate and succinate via an alpha-carboxy-carbanion intermediate. This is 2-methylisocitrate lyase from Shewanella oneidensis (strain ATCC 700550 / JCM 31522 / CIP 106686 / LMG 19005 / NCIMB 14063 / MR-1).